A 473-amino-acid chain; its full sequence is Trehalose-6-phosphate synthase (473 aa).

Arginine 10 contacts D-glucose 6-phosphate. Residue 21-22 (GG) coordinates UDP-alpha-D-glucose. Positions 76 and 130 each coordinate D-glucose 6-phosphate. Residues arginine 262 and lysine 267 each contribute to the UDP-alpha-D-glucose site. Arginine 300 contacts D-glucose 6-phosphate. Residues phenylalanine 339 and 365–369 (LVAKE) contribute to the UDP-alpha-D-glucose site.

This sequence belongs to the glycosyltransferase 20 family. In terms of assembly, homotetramer.

It catalyses the reaction D-glucose 6-phosphate + UDP-alpha-D-glucose = alpha,alpha-trehalose 6-phosphate + UDP + H(+). The protein operates within glycan biosynthesis; trehalose biosynthesis. Its function is as follows. Probably involved in the osmoprotection via the biosynthesis of trehalose. Catalyzes the transfer of glucose from UDP-alpha-D-glucose (UDP-Glc) to D-glucose 6-phosphate (Glc-6-P) to form trehalose-6-phosphate. Acts with retention of the anomeric configuration of the UDP-sugar donor. The protein is Trehalose-6-phosphate synthase of Citrobacter koseri (strain ATCC BAA-895 / CDC 4225-83 / SGSC4696).